A 124-amino-acid chain; its full sequence is uncharacterized protein (124 aa).

The signal sequence occupies residues 1 to 18 (MHIIKTLISVGVAFSLSA). Cys-19 carries N-palmitoyl cysteine lipidation. Cys-19 carries the S-diacylglycerol cysteine lipid modification.

The protein resides in the cell membrane. This is an uncharacterized protein from Pasteurella multocida (strain Pm70).